A 606-amino-acid polypeptide reads, in one-letter code: Kelch-like protein 41 (606 aa).

Serine 3 is modified (phosphoserine). The BTB domain occupies 33 to 100 (IDCTLKAGDK…LYSASIDLND (68 aa)). The BACK domain maps to 135 to 237 (CLAILRLGLL…TEKYFKDHVE (103 aa)). 5 Kelch repeats span residues 346 to 398 (QIYV…EVDD), 399 to 447 (KIYV…SHKG), 448 to 495 (MIYC…VHKG), 497 to 542 (IVIA…SLAG), and 544 to 599 (LYAI…TRLN).

In terms of assembly, interacts with NRAP. Interacts with LASP1. Part of a complex that contains CUL3, RBX1 and KLHL41. In terms of processing, ubiquitinated by E3 ubiquitin ligase complex formed by CUL3 and RBX1 and probably targeted for proteasome-independent degradation. Quinone-induced oxidative stress increases its ubiquitination. As to expression, sarcomeric muscle.

The protein localises to the cytoplasm. Its subcellular location is the cytoskeleton. It localises to the cell projection. It is found in the pseudopodium. The protein resides in the ruffle. The protein localises to the myofibril. Its subcellular location is the sarcomere. It localises to the m line. It is found in the sarcoplasmic reticulum membrane. The protein resides in the endoplasmic reticulum membrane. Involved in skeletal muscle development and differentiation. Regulates proliferation and differentiation of myoblasts and plays a role in myofibril assembly by promoting lateral fusion of adjacent thin fibrils into mature, wide myofibrils. Required for pseudopod elongation in transformed cells. The protein is Kelch-like protein 41 (KLHL41) of Homo sapiens (Human).